The following is a 258-amino-acid chain: Gamma-secretase subunit Aph-1b (258 aa).

The next 7 membrane-spanning stretches (helical) occupy residues 3–23 (VAVFFGCTFIAFGPAIALFMF), 32–52 (VIFLIAGAFFWLVSLLLSSLV), 70–90 (GLLIFGVVLSVLLQEAFRYGY), 118–138 (AYVSGLGFGFMSGAFSVVNIL), 161–181 (AFMTLAIILLHMFWGVVFFEA), 187–207 (WWALGAVVASHLVVSCLTFVN), and 214–234 (LIPTYIILSVMAVWAYLCAGG).

The protein belongs to the APH-1 family. As to quaternary structure, component of the gamma-secretase complex, a complex composed of a presenilin homodimer (PSEN1 or PSEN2), nicastrin (NCSTN), APH1 and PEN2.

It localises to the membrane. Its function is as follows. Essential subunit of the gamma-secretase complex, an endoprotease complex that catalyzes the intramembrane cleavage of integral proteins such as Notch receptors. It may represent a stabilizing cofactor for the presenilin homodimer that promotes the formation of a stable complex. This is Gamma-secretase subunit Aph-1b (aph1b) from Danio rerio (Zebrafish).